The following is a 277-amino-acid chain: Release factor glutamine methyltransferase (277 aa).

Residues 117–121, Asp140, Trp168, and Asn182 contribute to the S-adenosyl-L-methionine site; that span reads GTGCG. 182 to 185 contacts substrate; sequence NPPY.

It belongs to the protein N5-glutamine methyltransferase family. PrmC subfamily.

The catalysed reaction is L-glutaminyl-[peptide chain release factor] + S-adenosyl-L-methionine = N(5)-methyl-L-glutaminyl-[peptide chain release factor] + S-adenosyl-L-homocysteine + H(+). Functionally, methylates the class 1 translation termination release factors RF1/PrfA and RF2/PrfB on the glutamine residue of the universally conserved GGQ motif. The chain is Release factor glutamine methyltransferase from Buchnera aphidicola subsp. Acyrthosiphon pisum (strain APS) (Acyrthosiphon pisum symbiotic bacterium).